We begin with the raw amino-acid sequence, 154 residues long: Endoribonuclease YbeY (154 aa).

The Zn(2+) site is built by His113, His117, and His123.

The protein belongs to the endoribonuclease YbeY family. Zn(2+) serves as cofactor.

It is found in the cytoplasm. Its function is as follows. Single strand-specific metallo-endoribonuclease involved in late-stage 70S ribosome quality control and in maturation of the 3' terminus of the 16S rRNA. The polypeptide is Endoribonuclease YbeY (Aeromonas hydrophila subsp. hydrophila (strain ATCC 7966 / DSM 30187 / BCRC 13018 / CCUG 14551 / JCM 1027 / KCTC 2358 / NCIMB 9240 / NCTC 8049)).